Consider the following 162-residue polypeptide: 2-C-methyl-D-erythritol 2,4-cyclodiphosphate synthase (162 aa).

Residues Asp-9 and His-11 each coordinate a divalent metal cation. Residues 9 to 11 and 37 to 38 contribute to the 4-CDP-2-C-methyl-D-erythritol 2-phosphate site; these read DFH and HS. An a divalent metal cation-binding site is contributed by His-45. Residues 59–61, 64–68, 135–138, and Arg-145 contribute to the 4-CDP-2-C-methyl-D-erythritol 2-phosphate site; these read DIG, FPDTD, and TTSE.

Belongs to the IspF family. As to quaternary structure, homotrimer. A divalent metal cation serves as cofactor.

The catalysed reaction is 4-CDP-2-C-methyl-D-erythritol 2-phosphate = 2-C-methyl-D-erythritol 2,4-cyclic diphosphate + CMP. The protein operates within isoprenoid biosynthesis; isopentenyl diphosphate biosynthesis via DXP pathway; isopentenyl diphosphate from 1-deoxy-D-xylulose 5-phosphate: step 4/6. Involved in the biosynthesis of isopentenyl diphosphate (IPP) and dimethylallyl diphosphate (DMAPP), two major building blocks of isoprenoid compounds. Catalyzes the conversion of 4-diphosphocytidyl-2-C-methyl-D-erythritol 2-phosphate (CDP-ME2P) to 2-C-methyl-D-erythritol 2,4-cyclodiphosphate (ME-CPP) with a corresponding release of cytidine 5-monophosphate (CMP). The chain is 2-C-methyl-D-erythritol 2,4-cyclodiphosphate synthase from Leptospira biflexa serovar Patoc (strain Patoc 1 / Ames).